The following is a 188-amino-acid chain: Tumor necrosis factor alpha-induced protein 8-like protein (188 aa).

The protein belongs to the TNFAIP8 family.

The sequence is that of Tumor necrosis factor alpha-induced protein 8-like protein from Drosophila pseudoobscura pseudoobscura (Fruit fly).